The chain runs to 750 residues: Xylosyl- and glucuronyltransferase LARGE2s (750 aa).

Residues 1-10 (MLCPCRGKLK) lie on the Cytoplasmic side of the membrane. The helical; Signal-anchor for type II membrane protein transmembrane segment at 11–31 (LLVVSLSFVILFTWLYLLVGN) threads the bilayer. Residues 32–750 (SENGRSLLLS…LKYLTAQRNI (719 aa)) are Lumenal-facing. 3 N-linked (GlcNAc...) asparagine glycosylation sites follow: asparagine 116, asparagine 142, and asparagine 228. The segment at 132 to 407 (LHVACVCAGH…FLEYDGNLLR (276 aa)) is xylosyltransferase activity. The Mn(2+) site is built by aspartate 236 and aspartate 238. Asparagine 266 carries an N-linked (GlcNAc...) asparagine glycan. A glucuronyltransferase activity region spans residues 408–750 (RELFGCPSQA…LKYLTAQRNI (343 aa)). Residues aspartate 557 and aspartate 559 each contribute to the Mn(2+) site.

This sequence in the C-terminal section; belongs to the glycosyltransferase 49 family. In the N-terminal section; belongs to the glycosyltransferase 8 family. It depends on Mn(2+) as a cofactor.

Its subcellular location is the golgi apparatus membrane. The catalysed reaction is 3-O-[beta-D-GlcA-(1-&gt;3)-beta-D-Xyl-(1-&gt;4)-Rib-ol-P-Rib-ol-P-3-beta-D-GalNAc-(1-&gt;3)-beta-D-GlcNAc-(1-&gt;4)-(O-6-P-alpha-D-Man)]-Thr-[protein] + UDP-alpha-D-xylose = 3-O-[alpha-D-Xyl-(1-&gt;3)-beta-D-GlcA-(1-&gt;4)-beta-D-Xyl-(1-&gt;4)-Rib-ol-P-Rib-ol-P-3-beta-D-GalNAc-(1-&gt;3)-beta-D-GlcNAc-(1-&gt;4)-(O-6-P-alpha-D-Man)]-Thr-[protein] + UDP + H(+). It carries out the reaction 3-O-{(1-&gt;[3)-alpha-D-Xyl-(1-&gt;3)-beta-D-GlcA-(1-&gt;](n)-4)-beta-D-Xyl-(1-&gt;4)-Rib-ol-P-Rib-ol-P-3-beta-D-GalNAc-(1-&gt;3)-beta-D-GlcNAc-(1-&gt;4)-O-6-P-alpha-D-Man}-L-Thr-[protein] + UDP-alpha-D-glucuronate = 3-O-{beta-D-GlcA-(1-&gt;[3)-alpha-D-Xyl-(1-&gt;3)-beta-D-GlcA-(1-&gt;](n)-4)-beta-D-Xyl-(1-&gt;4)-Rib-ol-P-Rib-ol-P-3-beta-D-GalNAc-(1-&gt;3)-beta-D-GlcNAc-(1-&gt;4)-O-6-P-alpha-D-Man}-L-Thr-[protein] + UDP + H(+). It catalyses the reaction 3-O-{beta-D-GlcA-(1-&gt;[3)-alpha-D-Xyl-(1-&gt;3)-beta-D-GlcA-(1-&gt;](n)-4)-beta-D-Xyl-(1-&gt;4)-Rib-ol-P-Rib-ol-P-3-beta-D-GalNAc-(1-&gt;3)-beta-D-GlcNAc-(1-&gt;4)-O-6-P-alpha-D-Man}-L-Thr-[protein] + UDP-alpha-D-xylose = 3-O-{(1-&gt;[3)-alpha-D-Xyl-(1-&gt;3)-beta-D-GlcA-(1-&gt;](n+1)-4)-beta-D-Xyl-(1-&gt;4)-Rib-ol-P-Rib-ol-P-3-beta-D-GalNAc-(1-&gt;3)-beta-D-GlcNAc-(1-&gt;4)-O-6-P-alpha-D-Man}-L-Thr-[protein] + UDP + H(+). It functions in the pathway protein modification; protein glycosylation. In terms of biological role, bifunctional glycosyltransferase with both alpha-1,3-xylosyltransferase and beta-1,3-glucuronyltransferase activities involved in the maturation of alpha-dystroglycan (DAG1) by glycosylation leading to DAG1 binding to laminin G-like domain-containing extracellular proteins with high affinity and in a phosphorylated-O-mannosyl trisaccharide dependent manner. Elongates the glucuronyl-beta-1,4-xylose-beta disaccharide primer structure by adding repeating units [-3-Xylose-alpha-1,3-GlcA-beta-1-] to produce a heteropolysaccharide. Supports the maturation of DAG1 more effectively than LARGE1. In addition, can modify both heparan sulfate (HS)- and chondroitin/dermatan sulfate (CS/DS)-proteoglycans (PGs), namely GPC4, with a glycosaminoglycan (GAG)-like polysaccharide composed of xylose and glucuronic acid to confer laminin binding. The sequence is that of Xylosyl- and glucuronyltransferase LARGE2s from Danio rerio (Zebrafish).